The sequence spans 274 residues: 3-deoxy-manno-octulosonate cytidylyltransferase (274 aa).

The protein belongs to the KdsB family.

Its subcellular location is the cytoplasm. It carries out the reaction 3-deoxy-alpha-D-manno-oct-2-ulosonate + CTP = CMP-3-deoxy-beta-D-manno-octulosonate + diphosphate. It functions in the pathway nucleotide-sugar biosynthesis; CMP-3-deoxy-D-manno-octulosonate biosynthesis; CMP-3-deoxy-D-manno-octulosonate from 3-deoxy-D-manno-octulosonate and CTP: step 1/1. It participates in bacterial outer membrane biogenesis; lipopolysaccharide biosynthesis. Functionally, activates KDO (a required 8-carbon sugar) for incorporation into bacterial lipopolysaccharide in Gram-negative bacteria. The polypeptide is 3-deoxy-manno-octulosonate cytidylyltransferase (Bordetella avium (strain 197N)).